The primary structure comprises 452 residues: Pup--protein ligase (452 aa).

Position 9 (Glu-9) interacts with Mg(2+). Arg-53 lines the ATP pocket. Residue Tyr-55 coordinates Mg(2+). Asp-57 serves as the catalytic Proton acceptor. Glu-63 serves as a coordination point for Mg(2+). ATP is bound by residues Thr-66 and Trp-419.

Belongs to the Pup ligase/Pup deamidase family. Pup-conjugating enzyme subfamily. Pupylated at an undetermined lysine residue by the prokaryotic ubiquitin-like protein Pup, which leads to its degradation by the proteasome and thereby constitutes a negative auto-regulation.

The enzyme catalyses ATP + [prokaryotic ubiquitin-like protein]-L-glutamate + [protein]-L-lysine = ADP + phosphate + N(6)-([prokaryotic ubiquitin-like protein]-gamma-L-glutamyl)-[protein]-L-lysine.. It participates in protein degradation; proteasomal Pup-dependent pathway. Its pathway is protein modification; protein pupylation. Functionally, catalyzes the covalent attachment of the prokaryotic ubiquitin-like protein modifier Pup to the proteasomal substrate proteins, thereby targeting them for proteasomal degradation. This tagging system is termed pupylation. The ligation reaction likely involves the side-chain carboxylate of the C-terminal glutamate of Pup and the side-chain amino group of a substrate lysine. This chain is Pup--protein ligase (pafA), found in Mycolicibacterium smegmatis (strain ATCC 700084 / mc(2)155) (Mycobacterium smegmatis).